Consider the following 191-residue polypeptide: FMN reductase (NADPH) (191 aa).

This sequence belongs to the SsuE family. Homodimer.

It carries out the reaction FMNH2 + NADP(+) = FMN + NADPH + 2 H(+). Catalyzes an NADPH-dependent reduction of FMN, but is also able to reduce FAD or riboflavin. The chain is FMN reductase (NADPH) (ssuE) from Escherichia coli (strain K12).